A 551-amino-acid polypeptide reads, in one-letter code: Glucans biosynthesis protein D (551 aa).

Positions 1–32 form a signal peptide, tat-type signal; that stretch reads MDRRRFIKGSMAMAAVCGTSGIASLFSQAAFA.

The protein belongs to the OpgD/OpgG family. Predicted to be exported by the Tat system. The position of the signal peptide cleavage has not been experimentally proven.

It localises to the periplasm. Its pathway is glycan metabolism; osmoregulated periplasmic glucan (OPG) biosynthesis. Functionally, probably involved in the control of the structural glucose backbone of osmoregulated periplasmic glucans (OPGs). This chain is Glucans biosynthesis protein D, found in Escherichia coli O9:H4 (strain HS).